The chain runs to 303 residues: ATP synthase gamma chain (303 aa).

Belongs to the ATPase gamma chain family. F-type ATPases have 2 components, CF(1) - the catalytic core - and CF(0) - the membrane proton channel. CF(1) has five subunits: alpha(3), beta(3), gamma(1), delta(1), epsilon(1). CF(0) has three main subunits: a, b and c.

The protein resides in the cell inner membrane. In terms of biological role, produces ATP from ADP in the presence of a proton gradient across the membrane. The gamma chain is believed to be important in regulating ATPase activity and the flow of protons through the CF(0) complex. The polypeptide is ATP synthase gamma chain (Elusimicrobium minutum (strain Pei191)).